The following is a 367-amino-acid chain: CST complex subunit STN1 (367 aa).

The segment at residues 56-154 is a DNA-binding region (OB); it reads VEILGTVIGR…EIRVTTYYKV (99 aa). Winged helix-turn-helix (wHTH) regions lie at residues 190–294 and 295–367; these read RAFS…YVTR and EDKE…YTAF.

This sequence belongs to the STN1 family. Component of the CST complex, composed of TEN1, CTC1 and STN1. Interacts with TEN1 and CTC1; the interaction is direct. Interacts with ACD/TPP1.

Its subcellular location is the nucleus. It localises to the chromosome. The protein localises to the telomere. Its function is as follows. Component of the CST complex, a complex that binds to single-stranded DNA and is required to protect telomeres from DNA degradation. The CST complex binds single-stranded DNA with high affinity in a sequence-independent manner, while isolated subunits bind DNA with low affinity by themselves. In addition to telomere protection, the CST complex has probably a more general role in DNA metabolism at non-telomeric sites. The polypeptide is CST complex subunit STN1 (Ailuropoda melanoleuca (Giant panda)).